The following is a 31-amino-acid chain: Photosystem II reaction center protein T (31 aa).

A helical membrane pass occupies residues 3-23 (ALVYTFLLIGTLGIIFFAIFF).

Belongs to the PsbT family. In terms of assembly, PSII is composed of 1 copy each of membrane proteins PsbA, PsbB, PsbC, PsbD, PsbE, PsbF, PsbH, PsbI, PsbJ, PsbK, PsbL, PsbM, PsbT, PsbY, PsbZ, Psb30/Ycf12, at least 3 peripheral proteins of the oxygen-evolving complex and a large number of cofactors. It forms dimeric complexes.

The protein localises to the plastid. The protein resides in the chloroplast thylakoid membrane. In terms of biological role, found at the monomer-monomer interface of the photosystem II (PS II) dimer, plays a role in assembly and dimerization of PSII. PSII is a light-driven water plastoquinone oxidoreductase, using light energy to abstract electrons from H(2)O, generating a proton gradient subsequently used for ATP formation. This is Photosystem II reaction center protein T from Stigeoclonium helveticum (Green alga).